Here is a 177-residue protein sequence, read N- to C-terminus: Outer membrane lipoprotein Blc (177 aa).

Residues Met1–Ala18 form the signal peptide. Residue Cys19 is the site of N-palmitoyl cysteine attachment. Cys19 carries the S-diacylglycerol cysteine lipid modification.

This sequence belongs to the calycin superfamily. Lipocalin family. As to quaternary structure, homodimer.

The protein resides in the cell outer membrane. Functionally, involved in the storage or transport of lipids necessary for membrane maintenance under stressful conditions. Displays a binding preference for lysophospholipids. This Escherichia coli O157:H7 protein is Outer membrane lipoprotein Blc (blc).